The primary structure comprises 362 residues: Oxygen-dependent coproporphyrinogen-III oxidase (362 aa).

Substrate is bound at residue serine 118. A divalent metal cation contacts are provided by histidine 122 and histidine 132. Histidine 132 acts as the Proton donor in catalysis. 134–136 (NYR) contributes to the substrate binding site. 2 residues coordinate a divalent metal cation: histidine 166 and histidine 196. The segment at 286-321 (YVEFNLVWDRGTIFGLQTNGRTESILMSLPPLVRWE) is important for dimerization.

It belongs to the aerobic coproporphyrinogen-III oxidase family. As to quaternary structure, homodimer. The cofactor is a divalent metal cation.

It is found in the cytoplasm. The catalysed reaction is coproporphyrinogen III + O2 + 2 H(+) = protoporphyrinogen IX + 2 CO2 + 2 H2O. It participates in porphyrin-containing compound metabolism; protoporphyrin-IX biosynthesis; protoporphyrinogen-IX from coproporphyrinogen-III (O2 route): step 1/1. In terms of biological role, involved in the heme and chlorophyll biosynthesis. Catalyzes the aerobic oxidative decarboxylation of propionate groups of rings A and B of coproporphyrinogen-III to yield the vinyl groups in protoporphyrinogen-IX. The chain is Oxygen-dependent coproporphyrinogen-III oxidase from Synechococcus sp. (strain CC9605).